The sequence spans 228 residues: L-ribulose-5-phosphate 4-epimerase UlaF (228 aa).

Substrate contacts are provided by residues 26-27, 43-44, and 72-73; these read GN, SG, and SS. Aspartate 74, histidine 93, and histidine 95 together coordinate Zn(2+). Aspartate 118 (proton donor/acceptor) is an active-site residue. Zn(2+) is bound at residue histidine 167. The active-site Proton donor/acceptor is the tyrosine 225.

Belongs to the aldolase class II family. AraD/FucA subfamily. Zn(2+) is required as a cofactor.

The enzyme catalyses L-ribulose 5-phosphate = D-xylulose 5-phosphate. It participates in cofactor degradation; L-ascorbate degradation; D-xylulose 5-phosphate from L-ascorbate: step 4/4. Functionally, catalyzes the isomerization of L-ribulose 5-phosphate to D-xylulose 5-phosphate. Is involved in the anaerobic L-ascorbate utilization. The chain is L-ribulose-5-phosphate 4-epimerase UlaF from Escherichia coli (strain SMS-3-5 / SECEC).